We begin with the raw amino-acid sequence, 298 residues long: MQLEKMITEGSNAASAEIDRVSTLEMCRIINDEDKTVPLAVERVLPDIAAAIDVIHAQVSGGGRLIYLGAGTSGRLGILDASECPPTYGVKPGLVVGLIAGGEYAIQHAVEGAEDSREGGVNDLKNIGLTAQDVVVGIAASGRTPYVIAGLEYARQLGCRTVGISCNPGSAVSTTAEFAITPIVGAEVVTGSSRMKAGTAQKLVLNMLSTGLMIKSGKVFGNLMVDVVATNEKLHVRQVNIVKNATGCNAEQAETALIACERNCKTAIVMVLKNLDAAEAKKRLDQHGGFIRQVLDKE.

Positions 55–218 (IHAQVSGGGR…STGLMIKSGK (164 aa)) constitute an SIS domain. The Proton donor role is filled by E83. E114 is an active-site residue.

The protein belongs to the GCKR-like family. MurNAc-6-P etherase subfamily. Homodimer.

The enzyme catalyses N-acetyl-D-muramate 6-phosphate + H2O = N-acetyl-D-glucosamine 6-phosphate + (R)-lactate. The protein operates within amino-sugar metabolism; 1,6-anhydro-N-acetylmuramate degradation. It functions in the pathway amino-sugar metabolism; N-acetylmuramate degradation. Its pathway is cell wall biogenesis; peptidoglycan recycling. Functionally, specifically catalyzes the cleavage of the D-lactyl ether substituent of MurNAc 6-phosphate, producing GlcNAc 6-phosphate and D-lactate. Together with AnmK, is also required for the utilization of anhydro-N-acetylmuramic acid (anhMurNAc) either imported from the medium or derived from its own cell wall murein, and thus plays a role in cell wall recycling. This chain is N-acetylmuramic acid 6-phosphate etherase, found in Escherichia coli O7:K1 (strain IAI39 / ExPEC).